We begin with the raw amino-acid sequence, 149 residues long: Nucleoside diphosphate kinase (149 aa).

6 residues coordinate ATP: lysine 9, phenylalanine 57, arginine 85, threonine 91, arginine 102, and asparagine 112. Catalysis depends on histidine 115, which acts as the Pros-phosphohistidine intermediate.

The protein belongs to the NDK family. Homotetramer. Mg(2+) serves as cofactor.

Its subcellular location is the cytoplasm. The catalysed reaction is a 2'-deoxyribonucleoside 5'-diphosphate + ATP = a 2'-deoxyribonucleoside 5'-triphosphate + ADP. It catalyses the reaction a ribonucleoside 5'-diphosphate + ATP = a ribonucleoside 5'-triphosphate + ADP. Functionally, major role in the synthesis of nucleoside triphosphates other than ATP. The ATP gamma phosphate is transferred to the NDP beta phosphate via a ping-pong mechanism, using a phosphorylated active-site intermediate. The polypeptide is Nucleoside diphosphate kinase (Acaryochloris marina (strain MBIC 11017)).